Here is a 238-residue protein sequence, read N- to C-terminus: Nuclear transcription factor Y subunit B-9 (238 aa).

The DNA-binding element occupies 64–70 (MPIANVI). Positions 91 to 102 (IQECVSEYISFV) are subunit association domain (SAD). The disordered stretch occupies residues 203–238 (RYYQNGSSGQDESSVGGGSSSSINGMPAFDHYGQYK). The segment covering 208-227 (GSSGQDESSVGGGSSSSING) has biased composition (low complexity).

The protein belongs to the NFYB/HAP3 subunit family. Heterotrimeric transcription factor composed of three components, NF-YA, NF-YB and NF-YC. NF-YB and NF-YC must interact and dimerize for NF-YA association and DNA binding. Interacts with PRN1. In terms of tissue distribution, expressed in green siliques. Present in etiolated seedlings.

The protein localises to the nucleus. Functionally, component of the NF-Y/HAP transcription factor complex. The NF-Y complex stimulates the transcription of various genes by recognizing and binding to a CCAAT motif in promoters. Acts as a central regulator of the embryogenesis. Required for the speciation of cotyledon identity and the completion of embryo maturation. Controls seed storage protein genes through the regulation of FUS3 and ABI3. Involved in the blue light (BL) and abscisic acid (ABA) signaling pathways. In Arabidopsis thaliana (Mouse-ear cress), this protein is Nuclear transcription factor Y subunit B-9 (NFYB9).